The following is a 278-amino-acid chain: Movement protein (278 aa).

A disordered region spans residues 256 to 278; it reads TLRQEGRDKGDNRRVGVGESPTN. Over residues 259-271 the composition is skewed to basic and acidic residues; that stretch reads QEGRDKGDNRRVG.

Belongs to the tobamoviruses movement protein family.

This chain is Movement protein, found in Vitis vinifera (Grape).